Reading from the N-terminus, the 330-residue chain is ADP-L-glycero-D-manno-heptose-6-epimerase (330 aa).

NADP(+)-binding positions include 11-12, 32-33, K39, K54, 75-79, and N92; these read FI, DN, and EGACS. The Proton acceptor role is filled by Y139. Residue K143 participates in NADP(+) binding. N168 is a binding site for substrate. 2 residues coordinate NADP(+): V169 and K177. The Proton acceptor role is filled by K177. Residues R179, H186, 200–203, R213, and Y292 each bind substrate; that span reads FGEY.

The protein belongs to the NAD(P)-dependent epimerase/dehydratase family. HldD subfamily. In terms of assembly, homopentamer. Requires NADP(+) as cofactor.

It carries out the reaction ADP-D-glycero-beta-D-manno-heptose = ADP-L-glycero-beta-D-manno-heptose. It participates in nucleotide-sugar biosynthesis; ADP-L-glycero-beta-D-manno-heptose biosynthesis; ADP-L-glycero-beta-D-manno-heptose from D-glycero-beta-D-manno-heptose 7-phosphate: step 4/4. Catalyzes the interconversion between ADP-D-glycero-beta-D-manno-heptose and ADP-L-glycero-beta-D-manno-heptose via an epimerization at carbon 6 of the heptose. The sequence is that of ADP-L-glycero-D-manno-heptose-6-epimerase from Paraburkholderia phymatum (strain DSM 17167 / CIP 108236 / LMG 21445 / STM815) (Burkholderia phymatum).